The chain runs to 336 residues: Holliday junction branch migration complex subunit RuvB (336 aa).

The large ATPase domain (RuvB-L) stretch occupies residues 1–182; that stretch reads MKERIVNLET…FGMSFRMQFY (182 aa). ATP-binding positions include Leu-21, Arg-22, Gly-63, Lys-66, Thr-67, Ser-68, 129-131, Arg-172, Tyr-182, and Arg-219; that span reads EDF. Position 67 (Thr-67) interacts with Mg(2+). Residues 183–253 form a small ATPAse domain (RuvB-S) region; sequence NPSELALIIK…ITLHALNELG (71 aa). The tract at residues 256-336 is head domain (RuvB-H); that stretch reads ELGFDEADLA…IPTLNPQTLF (81 aa). 2 residues coordinate DNA: Arg-310 and Arg-315.

Belongs to the RuvB family. As to quaternary structure, homohexamer. Forms an RuvA(8)-RuvB(12)-Holliday junction (HJ) complex. HJ DNA is sandwiched between 2 RuvA tetramers; dsDNA enters through RuvA and exits via RuvB. An RuvB hexamer assembles on each DNA strand where it exits the tetramer. Each RuvB hexamer is contacted by two RuvA subunits (via domain III) on 2 adjacent RuvB subunits; this complex drives branch migration. In the full resolvosome a probable DNA-RuvA(4)-RuvB(12)-RuvC(2) complex forms which resolves the HJ.

Its subcellular location is the cytoplasm. The catalysed reaction is ATP + H2O = ADP + phosphate + H(+). Its function is as follows. The RuvA-RuvB-RuvC complex processes Holliday junction (HJ) DNA during genetic recombination and DNA repair, while the RuvA-RuvB complex plays an important role in the rescue of blocked DNA replication forks via replication fork reversal (RFR). RuvA specifically binds to HJ cruciform DNA, conferring on it an open structure. The RuvB hexamer acts as an ATP-dependent pump, pulling dsDNA into and through the RuvAB complex. RuvB forms 2 homohexamers on either side of HJ DNA bound by 1 or 2 RuvA tetramers; 4 subunits per hexamer contact DNA at a time. Coordinated motions by a converter formed by DNA-disengaged RuvB subunits stimulates ATP hydrolysis and nucleotide exchange. Immobilization of the converter enables RuvB to convert the ATP-contained energy into a lever motion, pulling 2 nucleotides of DNA out of the RuvA tetramer per ATP hydrolyzed, thus driving DNA branch migration. The RuvB motors rotate together with the DNA substrate, which together with the progressing nucleotide cycle form the mechanistic basis for DNA recombination by continuous HJ branch migration. Branch migration allows RuvC to scan DNA until it finds its consensus sequence, where it cleaves and resolves cruciform DNA. In Helicobacter pylori (strain ATCC 700392 / 26695) (Campylobacter pylori), this protein is Holliday junction branch migration complex subunit RuvB.